The following is a 415-amino-acid chain: Gamma-glutamyl phosphate reductase (415 aa).

The protein belongs to the gamma-glutamyl phosphate reductase family.

The protein localises to the cytoplasm. It carries out the reaction L-glutamate 5-semialdehyde + phosphate + NADP(+) = L-glutamyl 5-phosphate + NADPH + H(+). It functions in the pathway amino-acid biosynthesis; L-proline biosynthesis; L-glutamate 5-semialdehyde from L-glutamate: step 2/2. Catalyzes the NADPH-dependent reduction of L-glutamate 5-phosphate into L-glutamate 5-semialdehyde and phosphate. The product spontaneously undergoes cyclization to form 1-pyrroline-5-carboxylate. This Oceanobacillus iheyensis (strain DSM 14371 / CIP 107618 / JCM 11309 / KCTC 3954 / HTE831) protein is Gamma-glutamyl phosphate reductase.